The chain runs to 369 residues: Immunoglobulin superfamily member 5 (369 aa).

Positions 1–24 (MEGSWRDVLAVLVILAQLTVSGSS) are cleaved as a signal peptide. 2 consecutive Ig-like V-type domains span residues 25-125 (YQII…LSVQ) and 128-217 (GTLN…LTVN). The Extracellular segment spans residues 25–239 (YQIIEGPRNV…GEGQALPTWA (215 aa)). 2 N-linked (GlcNAc...) asparagine glycosylation sites follow: Asn33 and Asn45. Residues Cys46 and Cys109 are joined by a disulfide bond. Residues Asn146, Asn196, and Asn217 are each glycosylated (N-linked (GlcNAc...) asparagine). The cysteines at positions 149 and 201 are disulfide-linked. A helical transmembrane segment spans residues 240-260 (IILLAVAFSLLLILIIALIII). At 261 to 369 (FCCCCVSRRE…PQKIRNVTIV (109 aa)) the chain is on the cytoplasmic side. The disordered stretch occupies residues 321-354 (PKSGEVSLPEQRSSLPQQELDKHRPSPVTHPRVS).

This sequence belongs to the immunoglobulin superfamily. Interacts with MAGI1 at tight junctions, forms a tripartite complex with NPHS1. Interacts with LNX1 isoform 2 via its PDZ 2 domain, it may also interact with other isoforms containing this domain. In kidney, it is found in glomeruli and in the proximal tubules (at protein level).

The protein localises to the apical cell membrane. It is found in the cell junction. It localises to the tight junction. Its function is as follows. Provides, together with MAGI1, an adhesion machinery at tight junctions, which may regulate the permeability of kidney glomerulus and small intestinal epithelial cells. Mediates calcium-independent homophilic cell adhesion. In testis, it may function as a cell adhesion molecule rather than a tight-junction protein. It may participate in the adhesion between spermatogonia-spermatogonia, spermatogonia-Sertoli cells, and Sertoli cells-Sertoli cells. The chain is Immunoglobulin superfamily member 5 (Igsf5) from Rattus norvegicus (Rat).